The primary structure comprises 369 residues: Protein RecA (369 aa).

66–73 contributes to the ATP binding site; the sequence is GPESSGKT. The disordered stretch occupies residues 328–369; the sequence is GIDAESLEEKEDPEKVKEQRAKKAAPGEEKPAEPASPEKTDK. Residues 339–369 show a composition bias toward basic and acidic residues; it reads DPEKVKEQRAKKAAPGEEKPAEPASPEKTDK.

The protein belongs to the RecA family.

It is found in the cytoplasm. In terms of biological role, can catalyze the hydrolysis of ATP in the presence of single-stranded DNA, the ATP-dependent uptake of single-stranded DNA by duplex DNA, and the ATP-dependent hybridization of homologous single-stranded DNAs. It interacts with LexA causing its activation and leading to its autocatalytic cleavage. The sequence is that of Protein RecA from Lactobacillus delbrueckii subsp. bulgaricus (strain ATCC BAA-365 / Lb-18).